The primary structure comprises 294 residues: 33 kDa chaperonin (294 aa).

Cystine bridges form between Cys239–Cys241 and Cys272–Cys275.

The protein belongs to the HSP33 family. Post-translationally, under oxidizing conditions two disulfide bonds are formed involving the reactive cysteines. Under reducing conditions zinc is bound to the reactive cysteines and the protein is inactive.

The protein localises to the cytoplasm. In terms of biological role, redox regulated molecular chaperone. Protects both thermally unfolding and oxidatively damaged proteins from irreversible aggregation. Plays an important role in the bacterial defense system toward oxidative stress. The protein is 33 kDa chaperonin of Listeria monocytogenes serotype 4b (strain CLIP80459).